We begin with the raw amino-acid sequence, 378 residues long: Putative protein YbfL (378 aa).

The protein belongs to the transposase 11 family.

The protein is Putative protein YbfL (ybfL) of Escherichia coli (strain K12).